Reading from the N-terminus, the 136-residue chain is MFIPKKTKYKKDFKGRISGNAKGGYTLSFGSHGLKALEPSRLTSKQIESARRSISRTLKRVGKVWIRAFCHTSVSKKPMDVRMGKGKGSVEMWVCKVKPGKILFEIGGVPLNLAREALNKAQAKLPMKCKFVSDEL.

It belongs to the universal ribosomal protein uL16 family. Part of the 50S ribosomal subunit.

In terms of biological role, binds 23S rRNA and is also seen to make contacts with the A and possibly P site tRNAs. The protein is Large ribosomal subunit protein uL16 of Ehrlichia chaffeensis (strain ATCC CRL-10679 / Arkansas).